The primary structure comprises 144 residues: Mating factor alpha (144 aa).

A signal peptide (or 20) is located at residues 1 to 19 (MRFPSIFTAVLFAASSALA).

The active factor is excreted into the culture medium by haploid cells of the alpha mating type and acts on cells of the opposite mating type (type A). It mediates the conjugation process between the two types by inhibiting the initiation of DNA synthesis in type a cells and synchronizing them with type alpha. This Saccharomyces uvarum (Yeast) protein is Mating factor alpha.